A 312-amino-acid polypeptide reads, in one-letter code: Tyrosine recombinase XerC (312 aa).

A Core-binding (CB) domain is found at 1 to 103; it reads MIASIYSFLD…SIKSFAHYCV (103 aa). The 183-residue stretch at 124 to 306 folds into the Tyr recombinase domain; sequence ELPSPMTYAQ…SVKLKKQTHQ (183 aa). Active-site residues include arginine 164, lysine 188, histidine 258, arginine 261, and histidine 284. Tyrosine 293 serves as the catalytic O-(3'-phospho-DNA)-tyrosine intermediate.

Belongs to the 'phage' integrase family. XerC subfamily. As to quaternary structure, forms a cyclic heterotetrameric complex composed of two molecules of XerC and two molecules of XerD.

It is found in the cytoplasm. Functionally, site-specific tyrosine recombinase, which acts by catalyzing the cutting and rejoining of the recombining DNA molecules. The XerC-XerD complex is essential to convert dimers of the bacterial chromosome into monomers to permit their segregation at cell division. It also contributes to the segregational stability of plasmids. The protein is Tyrosine recombinase XerC of Chlamydia pneumoniae (Chlamydophila pneumoniae).